The chain runs to 347 residues: Glycerol-3-phosphate dehydrogenase [NAD(P)+] (347 aa).

3 residues coordinate NADPH: W20, R39, and K118. Sn-glycerol 3-phosphate contacts are provided by K118, G152, and S154. A156 serves as a coordination point for NADPH. Positions 207, 260, 270, 271, and 272 each coordinate sn-glycerol 3-phosphate. K207 serves as the catalytic Proton acceptor. Position 271 (R271) interacts with NADPH. The NADPH site is built by V295 and E297.

The protein belongs to the NAD-dependent glycerol-3-phosphate dehydrogenase family.

The protein resides in the cytoplasm. It catalyses the reaction sn-glycerol 3-phosphate + NAD(+) = dihydroxyacetone phosphate + NADH + H(+). It carries out the reaction sn-glycerol 3-phosphate + NADP(+) = dihydroxyacetone phosphate + NADPH + H(+). It participates in membrane lipid metabolism; glycerophospholipid metabolism. Catalyzes the reduction of the glycolytic intermediate dihydroxyacetone phosphate (DHAP) to sn-glycerol 3-phosphate (G3P), the key precursor for phospholipid synthesis. The protein is Glycerol-3-phosphate dehydrogenase [NAD(P)+] of Cupriavidus pinatubonensis (strain JMP 134 / LMG 1197) (Cupriavidus necator (strain JMP 134)).